We begin with the raw amino-acid sequence, 520 residues long: MTIAITIISSLLFLIVGLVVGSLIFKSSTEKKLAAARGTAELIVEDAKKEAETTKKEALLEAKEENHRLRTEIENELRGRRTETQKAENRLLQREENLDRKDTSLSKREATLERKEESISKRQQQIEEKESKLAEMIQAEQTELERISALSKEEAKSIILNQVEEELTHDTAIMVKESENRAKEESDKKAKNILSLAIQRCAADHVAETTVSVVTLPNDEMKGRIIGREGRNIRTLETLTGIDLIIDDTPEAVILSGFDPIRREIARIALEKLVQDGRIHPARIEEMVDKARKEVDEHIREVGEQATFEVGIHSIHPDLIKILGRLRYRTSYGQNVLNHSLEVSKLAGILAGELGEDVTLAKRAGLLHDIGKAIDHEIEGSHVEIGVELATKYKENDVVINSIASHHGDTEATSVIAVLVAAADALSAARPGARSETLENYIRRLEKLEEISESYDGVEKSYAIQAGREVRIIVEPDTIDDLSSYRLARDIRKRIEEELDYPGHIKVTVIRETRAVEYAK.

The helical transmembrane segment at 5–25 (ITIISSLLFLIVGLVVGSLIF) threads the bilayer. A disordered region spans residues 76–127 (ELRGRRTETQKAENRLLQREENLDRKDTSLSKREATLERKEESISKRQQQIE). One can recognise a KH domain in the interval 210-273 (TVSVVTLPND…EIARIALEKL (64 aa)). In terms of domain architecture, HD spans 336–429 (VLNHSLEVSK…VAAADALSAA (94 aa)).

This sequence belongs to the RNase Y family.

It localises to the cell membrane. In terms of biological role, endoribonuclease that initiates mRNA decay. The sequence is that of Ribonuclease Y from Listeria monocytogenes serotype 1/2a (strain 10403S).